Consider the following 714-residue polypeptide: Polyribonucleotide nucleotidyltransferase (714 aa).

2 residues coordinate Mg(2+): D496 and D502. A KH domain is found at 562–621 (PRLLTIKIDPDLIGMVIGPGGKTIKGITEQTRAKVDIADDGTVTIASSESENAEKAKRLI). Residues 631–699 (GDVYFGKVTR…NKGRINLTRL (69 aa)) form the S1 motif domain.

This sequence belongs to the polyribonucleotide nucleotidyltransferase family. Mg(2+) is required as a cofactor.

It is found in the cytoplasm. It catalyses the reaction RNA(n+1) + phosphate = RNA(n) + a ribonucleoside 5'-diphosphate. In terms of biological role, involved in mRNA degradation. Catalyzes the phosphorolysis of single-stranded polyribonucleotides processively in the 3'- to 5'-direction. The sequence is that of Polyribonucleotide nucleotidyltransferase from Picosynechococcus sp. (strain ATCC 27264 / PCC 7002 / PR-6) (Agmenellum quadruplicatum).